Reading from the N-terminus, the 62-residue chain is MPKIEVKNDDLELALKKFKRISLEVRRLAQRHEYHLRKGMRLREKQKIAQKKRRKFRSLASH.

This sequence belongs to the bacterial ribosomal protein bS21 family.

The polypeptide is Small ribosomal subunit protein bS21 (rpsU) (Mycoplasma genitalium (strain ATCC 33530 / DSM 19775 / NCTC 10195 / G37) (Mycoplasmoides genitalium)).